Here is a 215-residue protein sequence, read N- to C-terminus: Pyrrolidone-carboxylate peptidase (215 aa).

Catalysis depends on residues Glu81, Cys144, and His168.

It belongs to the peptidase C15 family. Homotetramer.

It is found in the cytoplasm. The enzyme catalyses Release of an N-terminal pyroglutamyl group from a polypeptide, the second amino acid generally not being Pro.. Removes 5-oxoproline from various penultimate amino acid residues except L-proline. In Bacillus velezensis (strain DSM 23117 / BGSC 10A6 / LMG 26770 / FZB42) (Bacillus amyloliquefaciens subsp. plantarum), this protein is Pyrrolidone-carboxylate peptidase.